The sequence spans 349 residues: UPF0324 inner membrane protein YeiH (349 aa).

Residues M1 to T12 are Periplasmic-facing. A helical membrane pass occupies residues M13–A35. Over I36–A38 the chain is Cytoplasmic. Residues V39–V61 form a helical membrane-spanning segment. Residues Y62–D99 lie on the Periplasmic side of the membrane. The chain crosses the membrane as a helical span at residues V100–L122. Residues G123 to R131 lie on the Cytoplasmic side of the membrane. The chain crosses the membrane as a helical span at residues H132–A151. Over T152–K162 the chain is Periplasmic. Residues V163–Y185 traverse the membrane as a helical segment. Residues P186–K261 are Cytoplasmic-facing. A helical transmembrane segment spans residues I262–P284. At K285–M290 the chain is on the periplasmic side. Residues L291 to S313 traverse the membrane as a helical segment. Topologically, residues A314–P322 are cytoplasmic. Residues L323–H345 form a helical membrane-spanning segment. At S346–A349 the chain is on the periplasmic side.

Belongs to the UPF0324 family.

Its subcellular location is the cell inner membrane. This Salmonella typhi protein is UPF0324 inner membrane protein YeiH (yeiH).